A 363-amino-acid polypeptide reads, in one-letter code: Fructose-bisphosphate aldolase C-B (363 aa).

Substrate is bound by residues arginine 56 and lysine 147. Glutamate 188 (proton acceptor) is an active-site residue. Lysine 230 functions as the Schiff-base intermediate with dihydroxyacetone-P in the catalytic mechanism.

It belongs to the class I fructose-bisphosphate aldolase family. As to quaternary structure, homotetramer.

It catalyses the reaction beta-D-fructose 1,6-bisphosphate = D-glyceraldehyde 3-phosphate + dihydroxyacetone phosphate. Its pathway is carbohydrate degradation; glycolysis; D-glyceraldehyde 3-phosphate and glycerone phosphate from D-glucose: step 4/4. The sequence is that of Fructose-bisphosphate aldolase C-B (aldocb) from Danio rerio (Zebrafish).